A 267-amino-acid polypeptide reads, in one-letter code: Tryptophan synthase alpha chain (267 aa).

Residues Glu47 and Asp58 each act as proton acceptor in the active site.

Belongs to the TrpA family. Tetramer of two alpha and two beta chains.

The catalysed reaction is (1S,2R)-1-C-(indol-3-yl)glycerol 3-phosphate + L-serine = D-glyceraldehyde 3-phosphate + L-tryptophan + H2O. It participates in amino-acid biosynthesis; L-tryptophan biosynthesis; L-tryptophan from chorismate: step 5/5. Its function is as follows. The alpha subunit is responsible for the aldol cleavage of indoleglycerol phosphate to indole and glyceraldehyde 3-phosphate. The sequence is that of Tryptophan synthase alpha chain from Chlorobium phaeobacteroides (strain DSM 266 / SMG 266 / 2430).